Here is a 206-residue protein sequence, read N- to C-terminus: 2,3-bisphosphoglycerate-dependent phosphoglycerate mutase (206 aa).

Substrate contacts are provided by residues 9-16 (RHGQSEWN), 22-23 (TG), arginine 61, 88-91 (ERDY), lysine 99, 115-116 (RR), and 159-160 (GN). Histidine 10 serves as the catalytic Tele-phosphohistidine intermediate. The active-site Proton donor/acceptor is the glutamate 88.

Belongs to the phosphoglycerate mutase family. BPG-dependent PGAM subfamily. In terms of assembly, homodimer.

The enzyme catalyses (2R)-2-phosphoglycerate = (2R)-3-phosphoglycerate. It participates in carbohydrate degradation; glycolysis; pyruvate from D-glyceraldehyde 3-phosphate: step 3/5. Catalyzes the interconversion of 2-phosphoglycerate and 3-phosphoglycerate. In Brucella ovis (strain ATCC 25840 / 63/290 / NCTC 10512), this protein is 2,3-bisphosphoglycerate-dependent phosphoglycerate mutase.